A 428-amino-acid chain; its full sequence is UPF0597 protein BF3772 (428 aa).

This sequence belongs to the UPF0597 family.

The polypeptide is UPF0597 protein BF3772 (Bacteroides fragilis (strain YCH46)).